Here is a 147-residue protein sequence, read N- to C-terminus: Cyanate hydratase (147 aa).

Active-site residues include R88, E91, and S114.

Belongs to the cyanase family.

The catalysed reaction is cyanate + hydrogencarbonate + 3 H(+) = NH4(+) + 2 CO2. In terms of biological role, catalyzes the reaction of cyanate with bicarbonate to produce ammonia and carbon dioxide. This chain is Cyanate hydratase, found in Prochlorococcus marinus subsp. pastoris (strain CCMP1986 / NIES-2087 / MED4).